Consider the following 108-residue polypeptide: uncharacterized protein (108 aa).

The span at Met1–Thr14 shows a compositional bias: polar residues. The segment at Met1–Gly31 is disordered. Positions Gly15–Gly31 are enriched in basic and acidic residues.

The protein belongs to the SUI1 family.

This is an uncharacterized protein from Escherichia coli (strain K12).